The following is a 498-amino-acid chain: Histidine--tRNA ligase (498 aa).

The protein belongs to the class-II aminoacyl-tRNA synthetase family. As to quaternary structure, homodimer.

The protein resides in the cytoplasm. It carries out the reaction tRNA(His) + L-histidine + ATP = L-histidyl-tRNA(His) + AMP + diphosphate + H(+). This is Histidine--tRNA ligase from Bartonella quintana (strain Toulouse) (Rochalimaea quintana).